The primary structure comprises 239 residues: Endolytic peptidoglycan transglycosylase RlpA (239 aa).

The first 25 residues, 1–25 (MTLTRKTLFLLTAAFGIHSFQTASA), serve as a signal peptide directing secretion. The SPOR domain occupies 160 to 239 (VAENKDIFID…GMVRAVLTAG (80 aa)).

This sequence belongs to the RlpA family.

In terms of biological role, lytic transglycosylase with a strong preference for naked glycan strands that lack stem peptides. In Neisseria meningitidis serogroup A / serotype 4A (strain DSM 15465 / Z2491), this protein is Endolytic peptidoglycan transglycosylase RlpA.